A 204-amino-acid polypeptide reads, in one-letter code: Large ribosomal subunit protein eL15z (204 aa).

It belongs to the eukaryotic ribosomal protein eL15 family.

The sequence is that of Large ribosomal subunit protein eL15z (SB61) from Picea mariana (Black spruce).